The primary structure comprises 339 residues: Glycerol-3-phosphate dehydrogenase [NAD(P)+] (339 aa).

NADPH-binding residues include serine 15, tyrosine 16, histidine 36, and lysine 110. Sn-glycerol 3-phosphate-binding residues include lysine 110, glycine 139, and threonine 141. Residue alanine 143 coordinates NADPH. Lysine 195, aspartate 248, serine 258, arginine 259, and asparagine 260 together coordinate sn-glycerol 3-phosphate. The active-site Proton acceptor is lysine 195. Position 259 (arginine 259) interacts with NADPH. NADPH is bound by residues valine 283 and glutamate 285.

Belongs to the NAD-dependent glycerol-3-phosphate dehydrogenase family.

Its subcellular location is the cytoplasm. It carries out the reaction sn-glycerol 3-phosphate + NAD(+) = dihydroxyacetone phosphate + NADH + H(+). It catalyses the reaction sn-glycerol 3-phosphate + NADP(+) = dihydroxyacetone phosphate + NADPH + H(+). The protein operates within membrane lipid metabolism; glycerophospholipid metabolism. Its function is as follows. Catalyzes the reduction of the glycolytic intermediate dihydroxyacetone phosphate (DHAP) to sn-glycerol 3-phosphate (G3P), the key precursor for phospholipid synthesis. This Shigella dysenteriae serotype 1 (strain Sd197) protein is Glycerol-3-phosphate dehydrogenase [NAD(P)+].